Reading from the N-terminus, the 922-residue chain is Lacticin 481/lactococcin biosynthesis protein LcnDR2 (922 aa).

Functionally, could be implicated in the processing or the export process of the lantibiotic lacticin 481/lactococcin DR. The sequence is that of Lacticin 481/lactococcin biosynthesis protein LcnDR2 (lcnDR2) from Lactococcus lactis subsp. lactis (Streptococcus lactis).